Reading from the N-terminus, the 185-residue chain is Ubiquitin-fold modifier-conjugating enzyme 1 (185 aa).

Residue Cys119 is the Glycyl thioester intermediate of the active site.

The protein belongs to the ubiquitin-conjugating enzyme family. UFC1 subfamily.

Its function is as follows. E2-like enzyme which forms an intermediate with UFM1 via a thioester linkage. In Oryza sativa subsp. japonica (Rice), this protein is Ubiquitin-fold modifier-conjugating enzyme 1.